A 545-amino-acid chain; its full sequence is Probable acyl-activating enzyme 4 (545 aa).

Belongs to the ATP-dependent AMP-binding enzyme family. In terms of tissue distribution, expressed in roots, leaves, stems, flowers and developing seeds.

May act as an acid--thiol ligase that activates carboxylic acids by forming acyl-CoAs. The chain is Probable acyl-activating enzyme 4 (AEE4) from Arabidopsis thaliana (Mouse-ear cress).